Consider the following 484-residue polypeptide: tRNA sulfurtransferase (484 aa).

The THUMP domain maps to 63-167 (EAFGERLACI…NDNLYLIDKR (105 aa)). ATP is bound by residues 185–186 (LI), lysine 267, glycine 289, and glutamine 298. Cysteine 346 and cysteine 458 are disulfide-bonded. Positions 406-484 (INANEIIIDV…GYTNVKVYRP (79 aa)) constitute a Rhodanese domain. Cysteine 458 acts as the Cysteine persulfide intermediate in catalysis.

The protein belongs to the ThiI family.

It localises to the cytoplasm. The catalysed reaction is [ThiI sulfur-carrier protein]-S-sulfanyl-L-cysteine + a uridine in tRNA + 2 reduced [2Fe-2S]-[ferredoxin] + ATP + H(+) = [ThiI sulfur-carrier protein]-L-cysteine + a 4-thiouridine in tRNA + 2 oxidized [2Fe-2S]-[ferredoxin] + AMP + diphosphate. It carries out the reaction [ThiS sulfur-carrier protein]-C-terminal Gly-Gly-AMP + S-sulfanyl-L-cysteinyl-[cysteine desulfurase] + AH2 = [ThiS sulfur-carrier protein]-C-terminal-Gly-aminoethanethioate + L-cysteinyl-[cysteine desulfurase] + A + AMP + 2 H(+). It functions in the pathway cofactor biosynthesis; thiamine diphosphate biosynthesis. Its function is as follows. Catalyzes the ATP-dependent transfer of a sulfur to tRNA to produce 4-thiouridine in position 8 of tRNAs, which functions as a near-UV photosensor. Also catalyzes the transfer of sulfur to the sulfur carrier protein ThiS, forming ThiS-thiocarboxylate. This is a step in the synthesis of thiazole, in the thiamine biosynthesis pathway. The sulfur is donated as persulfide by IscS. The polypeptide is tRNA sulfurtransferase (Shewanella halifaxensis (strain HAW-EB4)).